The sequence spans 630 residues: DNA topoisomerase 4 subunit B (630 aa).

ATP contacts are provided by residues Y5, N42, D69, 110–116 (GLHGVGI), and K334. The region spanning 412 to 525 (TELFLVEGDS…HGHVYVALPP (114 aa)) is the Toprim domain. Mg(2+) contacts are provided by E418, D490, and D492.

This sequence belongs to the type II topoisomerase family. ParE type 1 subfamily. In terms of assembly, heterotetramer composed of ParC and ParE. Requires Mg(2+) as cofactor. Mn(2+) serves as cofactor. It depends on Ca(2+) as a cofactor.

The enzyme catalyses ATP-dependent breakage, passage and rejoining of double-stranded DNA.. Its activity is regulated as follows. Pyrrolopyrimidines inhibit both GyrB and its paralog in topoisomerase IV (parE). In terms of biological role, topoisomerase IV is essential for chromosome segregation; it is the principal protein responsible for decatenating newly replicated chromosomes. It relaxes supercoiled DNA. MukB stimulates the relaxation activity of topoisomerase IV and also has a modest effect on decatenation. This is DNA topoisomerase 4 subunit B from Escherichia coli (strain K12).